The following is a 754-amino-acid chain: Photosystem I P700 chlorophyll a apoprotein A1 (754 aa).

The next 8 membrane-spanning stretches (helical) occupy residues 72–95, 158–181, 197–221, 293–311, 351–374, 390–416, 438–460, and 535–553; these read IFSA…FHGA, LYCT…FHYH, MNHH…HVSL, TAHH…GHMY, WHAQ…HHMY, LSLF…IFMV, AIIS…LYIH, and FMVH…LILL. [4Fe-4S] cluster-binding residues include C577 and C586. Transmembrane regions (helical) follow at residues 593 to 614 and 668 to 690; these read HVFL…HFSW and LSAY…MFLF. H679 serves as a coordination point for chlorophyll a'. The chlorophyll a site is built by M687 and Y695. Position 696 (W696) interacts with phylloquinone. The chain crosses the membrane as a helical span at residues 728-748; sequence AVGVAHYLLGGIVTTWAFFLA.

It belongs to the PsaA/PsaB family. The PsaA/B heterodimer binds the P700 chlorophyll special pair and subsequent electron acceptors. PSI consists of a core antenna complex that captures photons, and an electron transfer chain that converts photonic excitation into a charge separation. The cyanobacterial PSI reaction center is composed of one copy each of PsaA,B,C,D,E,F,I,J,K,L,M and X, and forms trimeric complexes. PSI electron transfer chain: 5 chlorophyll a, 1 chlorophyll a', 2 phylloquinones and 3 4Fe-4S clusters. PSI core antenna: 90 chlorophyll a, 22 carotenoids, 3 phospholipids and 1 galactolipid. P700 is a chlorophyll a/chlorophyll a' dimer, A0 is one or more chlorophyll a, A1 is one or both phylloquinones and FX is a shared 4Fe-4S iron-sulfur center. is required as a cofactor.

It is found in the cellular thylakoid membrane. The enzyme catalyses reduced [plastocyanin] + hnu + oxidized [2Fe-2S]-[ferredoxin] = oxidized [plastocyanin] + reduced [2Fe-2S]-[ferredoxin]. In terms of biological role, psaA and PsaB bind P700, the primary electron donor of photosystem I (PSI), as well as the electron acceptors A0, A1 and FX. PSI is a plastocyanin/cytochrome c6-ferredoxin oxidoreductase, converting photonic excitation into a charge separation, which transfers an electron from the donor P700 chlorophyll pair to the spectroscopically characterized acceptors A0, A1, FX, FA and FB in turn. Oxidized P700 is reduced on the lumenal side of the thylakoid membrane by plastocyanin or cytochrome c6. The polypeptide is Photosystem I P700 chlorophyll a apoprotein A1 (Rippkaea orientalis (strain PCC 8801 / RF-1) (Cyanothece sp. (strain PCC 8801))).